We begin with the raw amino-acid sequence, 999 residues long: Probable K(+)/H(+) antiporter subunit A/B (999 aa).

The interval 1–20 (MTRPASVLAGPKSRPPIHSQ) is disordered. A run of 24 helical transmembrane segments spans residues 31–48 (LLSV…IAIF), 63–85 (AIAL…GGVL), 106–128 (FAWL…ARYY), 138–160 (FFAL…NLIL), 162–181 (AVFW…YWHH), 191–213 (MALT…IGKI), 233–255 (PLYG…QFPF), 270–292 (SAYL…FWPV), 299–321 (WFWI…AIFQ), 336–358 (LGLI…VFHI), 389–411 (GLFH…MAGV), 442–464 (YVAT…GVFF), 488–510 (FLVL…FLHT), 530–552 (GWNI…YFLM), 604–621 (RLLV…LLLG), 636–653 (AFAL…GSAY), 660–682 (LASL…WLSA), 686–708 (AVTQ…RWLP), 729–751 (LRDL…TVMT), 788–807 (TLGE…ALLL), 846–868 (FIPA…FLFL), 878–900 (FAAG…TRWV), 913–935 (SIGL…PFLT), and 955–977 (ILFD…IALA).

The protein in the N-terminal section; belongs to the CPA3 antiporters (TC 2.A.63) subunit A family. In the C-terminal section; belongs to the CPA3 antiporters (TC 2.A.63) subunit B family. As to quaternary structure, may form a heterooligomeric complex that consists of six subunits: PhaAB, PhaC, PhaD, PhaE, PhaF and PhaG.

The protein resides in the cell membrane. In terms of biological role, part of a K(+) efflux system which is required for the adaptation of R.meliloti to alkaline pH as well as for the infection process during symbiotic nodule development. The sequence is that of Probable K(+)/H(+) antiporter subunit A/B (phaAB) from Rhizobium meliloti (strain 1021) (Ensifer meliloti).